A 141-amino-acid chain; its full sequence is Nucleoside diphosphate kinase (141 aa).

The ATP site is built by K11, F59, R87, T93, R104, and N114. H117 (pros-phosphohistidine intermediate) is an active-site residue.

This sequence belongs to the NDK family. As to quaternary structure, homotetramer. It depends on Mg(2+) as a cofactor.

The protein resides in the cytoplasm. The enzyme catalyses a 2'-deoxyribonucleoside 5'-diphosphate + ATP = a 2'-deoxyribonucleoside 5'-triphosphate + ADP. It catalyses the reaction a ribonucleoside 5'-diphosphate + ATP = a ribonucleoside 5'-triphosphate + ADP. Functionally, major role in the synthesis of nucleoside triphosphates other than ATP. The ATP gamma phosphate is transferred to the NDP beta phosphate via a ping-pong mechanism, using a phosphorylated active-site intermediate. This chain is Nucleoside diphosphate kinase, found in Polaromonas naphthalenivorans (strain CJ2).